A 221-amino-acid polypeptide reads, in one-letter code: Ras-related protein Rab-28 (221 aa).

Ser2 is subject to N-acetylserine. Phosphoserine is present on Ser8. Gly21, Gly24, Lys25, Thr26, Ser27, Gly38, Lys39, Tyr41, and Thr44 together coordinate GTP. Thr26 is a Mg(2+) binding site. The tract at residues 35-49 (ETFGKQYKQTIGLDF) is switch I. Residues Thr44 and Asp68 each coordinate Mg(2+). Positions 68–85 (DIGGQTIGGKMLDKYIYG) are switch II. The GTP site is built by Gly71, Asn129, Lys130, Asp132, Ala160, and Lys161. Cys218 carries the post-translational modification Cysteine methyl ester. Cys218 carries S-farnesyl cysteine lipidation. A propeptide spans 219–221 (AVQ) (removed in mature form).

The protein belongs to the small GTPase superfamily. Rab family. In terms of assembly, interacts (prenylated form) with PDE6D; the interaction promotes RAB28 delivery to the photoreceptor outer segments. Interacts with KCNJ13; the interaction may facilitate cone outer segments phagocytosis. Interacts with RELA; the interaction contributes to RELA transport from cytoplasm to nucleus. Mg(2+) serves as cofactor. In terms of processing, isoprenylated.

Its subcellular location is the cell membrane. The protein localises to the cytoplasm. It localises to the cytoskeleton. The protein resides in the cilium basal body. It is found in the nucleus. The catalysed reaction is GTP + H2O = GDP + phosphate + H(+). Regulated by guanine nucleotide exchange factors (GEFs) which promote the exchange of bound GDP for free GTP. Regulated by GTPase activating proteins (GAPs) which increase the GTP hydrolysis activity. Inhibited by GDP dissociation inhibitors (GDIs). Functionally, the small GTPases Rab are key regulators of intracellular membrane trafficking, from the formation of transport vesicles to their fusion with membranes. Rabs cycle between an inactive GDP-bound form and an active GTP-bound form that is able to recruit to membranes different sets of downstream effectors directly responsible for vesicle formation, movement, tethering and fusion. RAB28 is required for shedding and phagocytosis of cone cell outer segments (OS) discs in the retina. Also participates in nuclear factor kappa-B p65/RELA nuclear transport in endothelial cells. This is Ras-related protein Rab-28 (RAB28) from Bos taurus (Bovine).